A 634-amino-acid polypeptide reads, in one-letter code: Probable potassium transport system protein Kup 1 (634 aa).

The next 12 helical transmembrane spans lie at Phe20–Leu40, Val64–Ile84, Phe110–Ile130, Pro148–Val168, Val176–Ile196, Ala224–Ala244, Phe256–Met276, Phe290–Ile310, Ile348–Phe368, Ala377–Met397, Val405–Ala425, and Ile430–Thr450.

Belongs to the HAK/KUP transporter (TC 2.A.72) family.

Its subcellular location is the cell inner membrane. The catalysed reaction is K(+)(in) + H(+)(in) = K(+)(out) + H(+)(out). Functionally, transport of potassium into the cell. Likely operates as a K(+):H(+) symporter. The polypeptide is Probable potassium transport system protein Kup 1 (Rhodopseudomonas palustris (strain BisB5)).